The primary structure comprises 319 residues: uncharacterized protein (319 aa).

Residues 21–70 are disordered; sequence ETETLKNSTDEVQTSSSFSSSGGRQSSPLTSGSKLEREKQTPSLEQGDTQ. Polar residues predominate over residues 25 to 34; sequence LKNSTDEVQT. Residues 35-51 show a composition bias toward low complexity; sequence SSSFSSSGGRQSSPLTS. The span at 61–70 shows a compositional bias: polar residues; sequence TPSLEQGDTQ.

This is an uncharacterized protein from Homo sapiens (Human).